Consider the following 593-residue polypeptide: Acetyl-coenzyme A transferase nodX (593 aa).

Positions 572 to 593 (DEDEQGSGFRSGSGLGSGSIAD) are disordered. Over residues 580-593 (FRSGSGLGSGSIAD) the composition is skewed to gly residues.

The protein belongs to the CoA-transferase III family.

The protein operates within secondary metabolite biosynthesis. Acetyl-coenzyme A transferase; part of the gene cluster that mediates the biosynthesis of the indole diterpenes nodulisporic acids (NA). Nodulisporic acid A (NAA) and its chemically modified derivatives are of particular significance because of their highly potent insecticidal activity against blood-feeding arthropods and lack of observable adverse effects on mammals, in particular the tremogenicity associated with the paspaline-derived IDTs is not observed. The geranylgeranyl diphosphate (GGPP) synthase ggs1, localized outside of the cluster, is proposed to catalyze the first step in nodulisporic acid biosynthesis via conversion of farnesyl pyrophosphate and isopentyl pyrophosphate into geranylgeranyl pyrophosphate (GGPP). Condensation of indole-3-glycerol phosphate with GGPP by the prenyl transferase nodC then forms 3-geranylgeranylindole (3-GGI). Epoxidation by the FAD-dependent monooxygenase nodM leads to a single-epoxidized-GGI that is substrate of the terpene cyclase nodB for cyclization to yield emindole SB. The terminal methyl carbon, C28, of emindole SB is then oxidized by the cytochrome P450 monooxygenase nodW to produce nodulisporic acid F (NAF), the pentacyclic core of NAA. NAF is converted to nodulisporic acid E (NAE) via prenylation. This step is probably performed by one of the indole diterpene prenyltransferases nodD1 or nodD2. Several oxidation steps performed by the FAD-linked oxidoreductase nodO and one of the cytochrome P450 monooxygenase nodR, nodX or nodZ further convert NAE to nodulisporic acid D (NAD). NAD is substrate of cytochrome P450 monooxygenase nodJ to produce the precursor of nodulisporic acid C (NAC), converted to NAC by one of the indole diterpene prenyltransferases nodD1 or nodD2. The FAD-dependent monooxygenase nodY2 then oxidizes NAC to nodulisporic acid B (NAB). Finally NAB is converted to NAA by one of the cytochrome P450 monooxygenases nodR, nodX or nodZ. This is Acetyl-coenzyme A transferase nodX from Hypoxylon pulicicidum.